Consider the following 444-residue polypeptide: Phosphoglucosamine mutase (444 aa).

Ser104 serves as the catalytic Phosphoserine intermediate. Mg(2+) contacts are provided by Ser104, Asp243, Asp245, and Asp247. Ser104 is modified (phosphoserine).

The protein belongs to the phosphohexose mutase family. Mg(2+) is required as a cofactor. Activated by phosphorylation.

It carries out the reaction alpha-D-glucosamine 1-phosphate = D-glucosamine 6-phosphate. In terms of biological role, catalyzes the conversion of glucosamine-6-phosphate to glucosamine-1-phosphate. The polypeptide is Phosphoglucosamine mutase (Neisseria meningitidis serogroup C / serotype 2a (strain ATCC 700532 / DSM 15464 / FAM18)).